Here is a 514-residue protein sequence, read N- to C-terminus: UDP-N-acetylmuramyl-tripeptide synthetase (514 aa).

Residues Leu-44 and Ser-46 each coordinate UDP-N-acetyl-alpha-D-muramoyl-L-alanyl-D-glutamate. 129 to 135 (GTNGKTS) is an ATP binding site. Residues 171 to 172 (TT), Ser-198, and Arg-206 each bind UDP-N-acetyl-alpha-D-muramoyl-L-alanyl-D-glutamate. Lys-238 carries the N6-carboxylysine modification.

It belongs to the MurCDEF family. MurE subfamily. Post-translationally, carboxylation is probably crucial for Mg(2+) binding and, consequently, for the gamma-phosphate positioning of ATP.

The protein localises to the cytoplasm. Its pathway is cell wall biogenesis; peptidoglycan biosynthesis. Catalyzes the addition of an amino acid to the nucleotide precursor UDP-N-acetylmuramoyl-L-alanyl-D-glutamate (UMAG) in the biosynthesis of bacterial cell-wall peptidoglycan. The chain is UDP-N-acetylmuramyl-tripeptide synthetase from Leifsonia xyli subsp. xyli (strain CTCB07).